The following is a 272-amino-acid chain: 3-methyl-2-oxobutanoate hydroxymethyltransferase (272 aa).

2 residues coordinate Mg(2+): aspartate 52 and aspartate 91. 3-methyl-2-oxobutanoate contacts are provided by residues 52 to 53 (DS), aspartate 91, and lysine 121. A Mg(2+)-binding site is contributed by glutamate 123. The active-site Proton acceptor is the glutamate 190.

The protein belongs to the PanB family. Homodecamer; pentamer of dimers. The cofactor is Mg(2+).

It is found in the cytoplasm. The catalysed reaction is 3-methyl-2-oxobutanoate + (6R)-5,10-methylene-5,6,7,8-tetrahydrofolate + H2O = 2-dehydropantoate + (6S)-5,6,7,8-tetrahydrofolate. It participates in cofactor biosynthesis; (R)-pantothenate biosynthesis; (R)-pantoate from 3-methyl-2-oxobutanoate: step 1/2. Its function is as follows. Catalyzes the reversible reaction in which hydroxymethyl group from 5,10-methylenetetrahydrofolate is transferred onto alpha-ketoisovalerate to form ketopantoate. The protein is 3-methyl-2-oxobutanoate hydroxymethyltransferase of Christiangramia forsetii (strain DSM 17595 / CGMCC 1.15422 / KT0803) (Gramella forsetii).